A 138-amino-acid polypeptide reads, in one-letter code: Small ribosomal subunit protein uS9c (138 aa).

This sequence belongs to the universal ribosomal protein uS9 family.

The protein localises to the plastid. It is found in the chloroplast. The sequence is that of Small ribosomal subunit protein uS9c (rps9) from Trieres chinensis (Marine centric diatom).